The sequence spans 393 residues: Dual-specificity RNA methyltransferase RlmN (393 aa).

The interval 1–22 (MSEQLLSELSPVAATSPSPAPA) is disordered. Residues 10–22 (SPVAATSPSPAPA) are compositionally biased toward low complexity. The Proton acceptor role is filled by Glu-114. A Radical SAM core domain is found at 120 to 358 (EDDRATLCVS…TTIVRKTRGD (239 aa)). Cys-127 and Cys-364 are oxidised to a cystine. [4Fe-4S] cluster-binding residues include Cys-134, Cys-138, and Cys-141. S-adenosyl-L-methionine is bound by residues 188–189 (GE), Ser-220, 242–244 (SLH), and Asn-321. Cys-364 serves as the catalytic S-methylcysteine intermediate.

It belongs to the radical SAM superfamily. RlmN family. [4Fe-4S] cluster serves as cofactor.

It localises to the cytoplasm. It catalyses the reaction adenosine(2503) in 23S rRNA + 2 reduced [2Fe-2S]-[ferredoxin] + 2 S-adenosyl-L-methionine = 2-methyladenosine(2503) in 23S rRNA + 5'-deoxyadenosine + L-methionine + 2 oxidized [2Fe-2S]-[ferredoxin] + S-adenosyl-L-homocysteine. The enzyme catalyses adenosine(37) in tRNA + 2 reduced [2Fe-2S]-[ferredoxin] + 2 S-adenosyl-L-methionine = 2-methyladenosine(37) in tRNA + 5'-deoxyadenosine + L-methionine + 2 oxidized [2Fe-2S]-[ferredoxin] + S-adenosyl-L-homocysteine. Functionally, specifically methylates position 2 of adenine 2503 in 23S rRNA and position 2 of adenine 37 in tRNAs. m2A2503 modification seems to play a crucial role in the proofreading step occurring at the peptidyl transferase center and thus would serve to optimize ribosomal fidelity. The chain is Dual-specificity RNA methyltransferase RlmN from Sodalis glossinidius (strain morsitans).